Reading from the N-terminus, the 165-residue chain is Regulator of ribonuclease activity A (165 aa).

The protein belongs to the RraA family. Homotrimer. Binds to both RNA-binding sites in the C-terminal region of Rne and to RhlB.

It is found in the cytoplasm. In terms of biological role, globally modulates RNA abundance by binding to RNase E (Rne) and regulating its endonucleolytic activity. Can modulate Rne action in a substrate-dependent manner by altering the composition of the degradosome. Modulates RNA-binding and helicase activities of the degradosome. The chain is Regulator of ribonuclease activity A from Haemophilus ducreyi (strain 35000HP / ATCC 700724).